The chain runs to 6781 residues: Replicase polyprotein 1ab (6781 aa).

The CoV Nsp1 globular domain occupies A2 to G109. Residues E59, N95, E99, and E102 each coordinate ssDNA. The CoV Nsp2 N-terminal domain occupies I112–G364. The 394-residue stretch at S383–T776 folds into the CoV Nsp2 middle domain. Residues V778–G895 enclose the CoV Nsp2 C-terminal domain. The region spanning G896–D991 is the Ubiquitin-like 1 domain. Residues I1009–A1040 are disordered. The 240-residue stretch at S1057–Y1296 folds into the Peptidase C16 1 domain. Residue C1091 is the For PL1-PRO activity of the active site. The C4-type 1; degenerate zinc finger occupies C1162–C1193. Catalysis depends on for PL1-PRO activity residues H1239 and D1252. Residues K1297 to T1465 form the Macro domain. The Ubiquitin-like 2 domain occupies N1630–P1685. The Peptidase C16 2 domain occupies S1691–E1951. The active-site For PL2-PRO activity is C1729. The C4-type 2; degenerate zinc-finger motif lies at D1808–H1838. Active-site for PL2-PRO activity residues include H1888 and D1901. 2 helical membrane passes run F1959–F1979 and W2022–M2042. Residues F1959–I2170 are HD1. The 3Ecto domain maps to A2038–D2102. 2 cysteine pairs are disulfide-bonded: C2054–C2080 and C2072–C2077. 3 helical membrane passes run I2105 to V2125, A2127 to Q2147, and I2150 to I2170. The Y1 stretch occupies residues M2176–G2266. Positions M2176–G2516 constitute a CoV Nsp3 Y domain. H2180, C2185, C2190, C2193, C2226, H2229, C2233, and C2236 together coordinate Zn(2+). The segment at H2180 to C2193 is ZF1. The ZF2 stretch occupies residues C2226–C2236. Residues P2267–L2356 are Y2. The segment at P2267–G2516 is coV-Y. The interval S2357–D2414 is Y3. The segment at V2415–G2516 is Y4. The next 7 helical transmembrane spans lie at F2528–F2548, I2619–G2639, G2654–Y2674, G2754–F2774, I2787–F2807, M2814–V2834, and L2863–F2883. The tract at residues F2528–F2883 is HD2. Positions L2902 to Q2997 constitute a Nsp4C domain. Residues A2998–Q3299 enclose the Peptidase C30 domain. Catalysis depends on for 3CL-PRO activity residues H3038 and C3141. The next 7 helical transmembrane spans lie at G3336–L3356, L3361–F3381, L3399–L3419, P3431–A3451, I3454–V3474, Y3476–I3496, and M3500–F3520. Residues G3336–F3520 form an HD3 region. A RdRp Nsp7 cofactor domain is found at S3580–Q3662. The 195-residue stretch at S3663 to Q3857 folds into the RdRp Nsp8 cofactor domain. The 108-residue stretch at N3858–Q3965 folds into the Nsp9 ssRNA-binding domain. The region spanning A3966–D4103 is the ExoN/MTase coactivator domain. Positions 4039, 4042, 4048, 4055, 4081, 4084, 4092, and 4094 each coordinate Zn(2+). 2 zinc fingers span residues C4039–C4055 and C4081–C4094. Positions Y4106–I4355 constitute a NiRAN domain. The Nsp12 Interface domain maps to K4361–S4459. Zn(2+)-binding residues include H4390, C4396, C4401, C4405, and C4582. Residues R4460–Q5027 enclose the Nsp12 RNA-dependent RNA polymerase domain. A rdRp Fingers N-ter region spans residues S4462–N4676. The interval T4677–P4715 is rdRp Palm N-ter. Residues P4707–G4869 form the RdRp catalytic domain. The segment at K4716–G4774 is rdRp Fingers C-ter. Zn(2+) contacts are provided by H4737, C4740, and C4741. A rdRp Palm C-ter region spans residues T4775–Q4910. Residues S4854, D4855, and D4856 each act as for RNA-directed RNA polymerase activity in the active site. The segment at H4911 to Q5027 is rdRp Thumb. The CV ZBD domain maps to S5028–D5140. Zn(2+) contacts are provided by C5032, C5035, C5043, C5046, C5053, C5056, H5060, H5066, C5077, C5082, C5099, and H5102. The (+)RNA virus helicase ATP-binding domain maps to S5275–L5466. An ATP-binding site is contributed by G5310–S5317. Positions H5467–S5636 constitute a (+)RNA virus helicase C-terminal domain. One can recognise an ExoN domain in the interval L5696–V5910. Active-site for exoribonuclease activity residues include D5714, E5716, and E5815. The Zn(2+) site is built by C5831, C5833, C5849, H5852, H5880, C5884, and H5887. Residues H5891 and D5896 each act as for exoribonuclease activity in the active site. Position 5902 (C5902) interacts with Zn(2+). In terms of domain architecture, N7-MTase spans Y5919–L6140. D5954–G5960 serves as a coordination point for S-adenosyl-L-methionine. Positions C6031–T6045 are gpppA-binding. Residues C6069, C6086, C6097, and H6100 each coordinate Zn(2+). Residues G6142–R6202 enclose the Nsp15 N-terminal oligomerization domain. The AV-Nsp11N/CoV-Nsp15M domain occupies K6203–E6320. Positions S6337–P6477 constitute a NendoU domain. Active-site for uridylate-specific endoribonuclease activity residues include H6367, H6382, and K6423. The 297-residue stretch at A6481–V6777 folds into the Nidovirus-type SAM-dependent 2'-O-MTase domain. Catalysis depends on for 2'-O-methyltransferase residues K6525, D6609, K6649, and E6682.

Belongs to the coronaviruses polyprotein 1ab family. As to quaternary structure, interacts with PL-PRO and nsp6. In terms of assembly, monomer. Homodimer; disulfide-linked. Interacts with nsp8 and nsp12 to form the replication-transcription complex (RTC): nsp12, nsp7, two subunits of nsp8, and up to two subunits of nsp13. Eight copies of nsp7 and eight copies of nsp8 assemble to form a heterohexadecamer dsRNA-encircling ring structure. As to quaternary structure, interacts with nsp7, nsp13 and nsp12 to form the replication-transcription complex (RTC): nsp12, nsp7, two subunits of nsp8, and up to two subunits of nsp13. Eight copies of nsp7 and eight copies of nsp8 assemble to form a heterohexadecamer dsRNA-encircling ring structure. In terms of assembly, homodimer. Forms a dodecamer and interacts with nsp14 and nsp16; these interactions enhance nsp14 and nsp16 enzymatic activities. The cofactor is Mn(2+). Post-translationally, specific enzymatic cleavages in vivo by its own proteases yield mature proteins. 3CL-PRO and PL-PRO proteinases are autocatalytically processed.

The protein localises to the host cytoplasm. Its subcellular location is the host nucleus. It is found in the host membrane. The protein resides in the host perinuclear region. It localises to the host endoplasmic reticulum. The protein localises to the host endoplasmic reticulum-Golgi intermediate compartment. The catalysed reaction is Thiol-dependent hydrolysis of ester, thioester, amide, peptide and isopeptide bonds formed by the C-terminal Gly of ubiquitin (a 76-residue protein attached to proteins as an intracellular targeting signal).. The enzyme catalyses a 5'-end diphospho-ribonucleoside in mRNA + GTP + H(+) = a 5'-end (5'-triphosphoguanosine)-ribonucleoside in mRNA + diphosphate. It carries out the reaction RNA(n) + a ribonucleoside 5'-triphosphate = RNA(n+1) + diphosphate. It catalyses the reaction ATP + H2O = ADP + phosphate + H(+). The catalysed reaction is a 5'-end (5'-triphosphoguanosine)-ribonucleoside in mRNA + S-adenosyl-L-methionine = a 5'-end (N(7)-methyl 5'-triphosphoguanosine)-ribonucleoside in mRNA + S-adenosyl-L-homocysteine. The enzyme catalyses uridylyl-uridylyl-ribonucleotide-RNA = a 3'-end uridylyl-2',3'-cyclophospho-uridine-RNA + a 5'-end dephospho-ribonucleoside-RNA. It carries out the reaction a 5'-end (N(7)-methyl 5'-triphosphoguanosine)-ribonucleoside in mRNA + S-adenosyl-L-methionine = a 5'-end (N(7)-methyl 5'-triphosphoguanosine)-(2'-O-methyl-ribonucleoside) in mRNA + S-adenosyl-L-homocysteine + H(+). Its activity is regulated as follows. Inhibited by the substrate-analog Cbz-Val-Asn-Ser-Thr-Leu-Gln-CMK. Inhibited by (R)-16. In terms of biological role, multifunctional protein responsible for the transcription of negative stranded RNA, leader RNA, subgenomic mRNAs and progeny virion RNA as well as proteinases responsible for the cleavage of the polyprotein into functional products. Functionally, plays a role in the inhibition of host interferon and pro-inflammatory cytokines production. Suppresses host RELA/p65 activation by blocking NFKBIA phosphorylation. Targets also the RLR pathway downstream of the IRF3 activation by targeting host CREBBP to proteasomal degradation. Its function is as follows. Responsible for the cleavages located at the N-terminus of the replicase polyprotein. Participates together with nsp4 in the assembly of virally-induced cytoplasmic double-membrane vesicles necessary for viral replication. Forms a molecular pore spanning the double membrane of the coronavirus replication organelle. In addition, PLP2 possesses a deubiquitinating/deISGylating activity and processes both 'Lys-48'- and 'Lys-63'-linked polyubiquitin chains from cellular substrates. PLP2 also antagonizes innate immune induction of type I interferon by blocking the nuclear translocation of host IRF-3. Participates in the inhibition of the integrated stress response (ISR) in the infected host cell. Participates in the assembly of virally-induced cytoplasmic double-membrane vesicles necessary for viral replication. In terms of biological role, responsible for the majority of cleavages as it cleaves the C-terminus of replicase polyprotein at 11 sites. Recognizes substrates containing the core sequence [ILMVF]-Q-|-[SGACN]. Also contains an ADP-ribose-1''-phosphate (ADRP)-binding function. Participates in the inhibition of the integrated stress response (ISR) in the infected host cell. Functionally, plays a role in the initial induction of autophagosomes from host endoplasmic reticulum. Later, limits the expansion of these phagosomes that are no longer able to deliver viral components to lysosomes. Its function is as follows. Plays a role in viral RNA synthesis. Forms a hexadecamer with nsp8 (8 subunits of each) that may participate in viral replication by acting as a primase. Alternatively, may synthesize substantially longer products than oligonucleotide primers. Plays a role in viral RNA synthesis. Forms a hexadecamer with nsp7 (8 subunits of each) that may participate in viral replication by acting as a primase. Alternatively, may synthesize substantially longer products than oligonucleotide primers. In terms of biological role, forms a primer, NSP9-pU, which is utilized by the polymerase for the initiation of RNA chains. Interacts with ribosome signal recognition particle RNA (SRP). Together with NSP8, suppress protein integration into the cell membrane, thereby disrupting host immune defenses. Functionally, plays a pivotal role in viral transcription by stimulating both nsp14 3'-5' exoribonuclease and nsp16 2'-O-methyltransferase activities. Therefore plays an essential role in viral mRNAs cap methylation. Its function is as follows. RNA-directed RNA polymerase that catalyzes the transcription of viral genomic and subgenomic RNAs. Acts in complex with nsp7 and nsp8 to transcribe both the minus and positive strands of genomic RNA. The kinase-like NiRAN domain of NSP12 attaches one or more nucleotides to the amino terminus of NSP9, forming a covalent RNA-protein intermediate that serves as transcription/replication primer. Subgenomic RNAs (sgRNAs) are formed by discontinuous transcription: The polymerase has the ability to pause at transcription-regulating sequences (TRS) and jump to the leader TRS, resulting in a major deletion. This creates a series of subgenomic RNAs that are replicated, transcribed and translated. In addition, Nsp12 is a subunit of the viral RNA capping enzyme that catalyzes the RNA guanylyltransferase reaction for genomic and sub-genomic RNAs. Subsequently, the NiRAN domain transfers RNA to GDP, and forms the core cap structure GpppA-RNA. Plays a role in viral RNA synthesis. Multi-functional protein with a zinc-binding domain in N-terminus displaying RNA and DNA duplex-unwinding activities with 5' to 3' polarity. ATPase activity is strongly stimulated by poly(U), poly(dT), poly(C), poly(dA), but not by poly(G). In terms of biological role, plays a role in viral RNA synthesis through two distinct activities. The N7-guanine methyltransferase activity plays a role in the formation of the cap structure GpppA-RNA. The proofreading exoribonuclease reduces the sensitivity of the virus to RNA mutagens during replication. This activity acts on both ssRNA and dsRNA in a 3'-5' direction. Functionally, plays a role in viral transcription/replication and prevents the simultaneous activation of host cell dsRNA sensors, such as MDA5/IFIH1, OAS, and PKR. Acts by degrading the 5'-polyuridines generated during replication of the poly(A) region of viral genomic and subgenomic RNAs. Catalyzes a two-step reaction in which a 2'3'-cyclic phosphate (2'3'-cP) is first generated by 2'-O transesterification, which is then hydrolyzed to a 3'-phosphate (3'-P). If not degraded, poly(U) RNA would hybridize with poly(A) RNA tails and activate host dsRNA sensors. Decreases the RNA levels and thus the expression of host TBK1 and IRF3, antagonizing the host innate response. This chain is Replicase polyprotein 1ab (rep), found in Sus scrofa (Pig).